Reading from the N-terminus, the 624-residue chain is MWVALGMLWLLALGGPHQAWGFCPSECSCSLRILSDGSKARTVVCSDPDLTLPPASIPPDTCKLRLERTAIRRVPGETFRPLSRLEQLWLPYNALSELSALMLRGLRRLRELRLPGNRLVTFPWAALRDTPQLQLLDLQANRLSTLPPEAAHFLENLTFLDLSNNQLMRLPEELLDVWAHLKTGPFLSGHHARLILGLQDNPWVCDCRLYDLVHLLDGWVSSNLIFIEARLRCASPRSLAGVAFSQLELRKCQSPELRPGVTSIISPLGSTVLLRCGATGIPGPEMSWRRANGRPLNGTVHQEVSSDGSSWTLLDLPVVSLFDSGDYICQAKNFLGASETLISLIVTEPQTSTGYSGIPGVLWARTGEGAEAAAYNNKLVARHVPHMPEHVALATKPSMPSIKEELALQNFQMDVPGEFSREPSEHQEAQMVRSLKVVGDTYHSVSLVWKAPQAGNTTAFSVLYAVFGHRDMRRMTVEPGKTSVTIEGLAPKTKYVACVCVRGLVPTKEQCVIFSTDEVVDAEGTQRLINMVVISVAAIIALPPTLLVCCGALRRRCHKCRTGGSAEASGAYVNLERLGHSEDSSEVLSRSSLSEGDRLLSARSSLDSQVLGVRGGRRINEYFC.

Positions 1–21 (MWVALGMLWLLALGGPHQAWG) are cleaved as a signal peptide. One can recognise an LRRNT domain in the interval 22–59 (FCPSECSCSLRILSDGSKARTVVCSDPDLTLPPASIPP). Residues 22–527 (FCPSECSCSL…EVVDAEGTQR (506 aa)) are Lumenal-facing. LRR repeat units lie at residues 60–81 (DTCKLRLERTAIRRVPGETFRP), 84–105 (RLEQLWLPYNALSELSALMLRG), 108–129 (RLRELRLPGNRLVTFPWAALRD), 132–153 (QLQLLDLQANRLSTLPPEAAHF), and 156–177 (NLTFLDLSNNQLMRLPEELLDV). Residue Asn156 is glycosylated (N-linked (GlcNAc...) asparagine). Residues 201-254 (NPWVCDCRLYDLVHLLDGWVSSNLIFIEARLRCASPRSLAGVAFSQLELRKCQS) form the LRRCT domain. The Ig-like C2-type domain occupies 267–336 (PLGSTVLLRC…YICQAKNFLG (70 aa)). An intrachain disulfide couples Cys276 to Cys329. 2 N-linked (GlcNAc...) asparagine glycosylation sites follow: Asn297 and Asn456. Residues 431 to 519 (MVRSLKVVGD…QCVIFSTDEV (89 aa)) form the Fibronectin type-III domain. The LRR 6 repeat unit spans residues 526-549 (QRLINMVVISVAAIIALPPTLLVC). Residues 528–548 (LINMVVISVAAIIALPPTLLV) traverse the membrane as a helical segment. The Cytoplasmic portion of the chain corresponds to 549-624 (CCGALRRRCH…GGRRINEYFC (76 aa)).

In terms of assembly, may form a homodimer. Interacts with LRIT2; may form a heterodimer with LRIT2. Interacts (via its N-terminal extracellular domain) with metabotropic glutamate receptor GRM6. Interacts (via its extreme C-terminus) with the scaffold protein FRMPD2 (via the third PDZ domain); the interaction leads to their colocalization in photoreceptor synapses. In terms of tissue distribution, expressed predominantly in developing photoreceptor and bipolar cells.

Its subcellular location is the endoplasmic reticulum membrane. It is found in the cell projection. The protein localises to the dendrite. Functionally, photoreceptor synaptic protein essential for normal vision. Involved in synapse formation in cone photoreceptor cells. This is Leucine-rich repeat, immunoglobulin-like domain and transmembrane domain-containing protein 1 (Lrit1) from Mus musculus (Mouse).